Reading from the N-terminus, the 541-residue chain is MTVMEHKKAAQLDLSQHGLSNVTEVLRNPSYDVLFEEETRPDLEGYERGVMTELGSVAVDTGIFTGRSPKDKYIVKDETTKDTLWWSDQGKNDNKAITPAVWDDLKALVTEQLSGKRLFVIDGFCGANPDTRLSVRVITEVAWQAHFVKNMFIRPTDEELESFEPDFVVMNGAKATNPNYEAQGLNSENFVAFNLTERVQIIGGTWYGGEMKKGMFAMMNYLLPLKGIASMHCSANVGKEGDVAVFFGLSGTGKTTLSTDPKRQLIGDDEHGWDDDGIFNFEGGCYAKTIRLSKEAEPDIFNAIRRDALLENVTVRNDGSIDFDDGSKTENTRVSYPIYHIDNIVKPISKAGHANKVIFLTADAFGVLPPVAKLTPEQTKYHFLSGFTAKLAGTERGITEPTPTFSAAFGAAFLTLHPTQYAEVLVKRMEAAGAEAYIVNTGWNGTGKRISIQDTRGIIDAILDGSIDNVETKNIPVFNLEVPTSLPGVDTSILDPRDTYTDPLQWDSKAEDLAQRFIKNFAQYTDNDEGKALVKAGPQLD.

Substrate-binding residues include Arg67, Tyr207, and Lys213. Residues Lys213, His232, and 248–256 contribute to the ATP site; that span reads GLSGTGKTT. Residues Lys213 and His232 each contribute to the Mn(2+) site. Asp269 serves as a coordination point for Mn(2+). Residues Glu297, Arg333, 449-450, and Thr455 each bind ATP; that span reads RI. Arg333 provides a ligand contact to substrate.

The protein belongs to the phosphoenolpyruvate carboxykinase (ATP) family. Monomer. Requires Mn(2+) as cofactor.

The protein resides in the cytoplasm. The enzyme catalyses oxaloacetate + ATP = phosphoenolpyruvate + ADP + CO2. It participates in carbohydrate biosynthesis; gluconeogenesis. Involved in the gluconeogenesis. Catalyzes the conversion of oxaloacetate (OAA) to phosphoenolpyruvate (PEP) through direct phosphoryl transfer between the nucleoside triphosphate and OAA. The polypeptide is Phosphoenolpyruvate carboxykinase (ATP) (Aliivibrio salmonicida (strain LFI1238) (Vibrio salmonicida (strain LFI1238))).